The following is a 339-amino-acid chain: MTDRSPFETDMLTLTRYVMEKGRQAKGTGELTQLLNSMLTAIKAISSAVRKAGLANLYGISGSVNVTGDEVKKLDVLSNSLVINMLQSSYSTCVLVSEENKEAVITAQERRGKYVVCFDPLDGSSNIDCLASIGTIFAIYRKTTEDEPSEKDALQPGRNIVAAGYALYGSATLVALSTGQGVDLFMLDPALGEFVLVEKDVRIKKKGKIFSLNEGYAKYFDAATAEYVQKKKFPEDGSEPYGARYVGSMVADVHRTLVYGGIFMYPANQKSPNGKLRLLYECNPVAYIIEQAGGMATTGTQPVLDVKPESIHQRVPLILGSPEDVQEYLSCVQRNQAGR.

Positions 3–10 (DRSPFETD) are important for interaction with ALDOA. AMP contacts are provided by residues valine 18 and 28–32 (TGELT). Mg(2+) is bound by residues aspartate 69 and glutamate 98. 113 to 114 (KY) contacts AMP. Positions 119, 121, and 122 each coordinate Mg(2+). Aspartate 122 contacts substrate. Arginine 141 provides a ligand contact to AMP. Residues 204–208 (KKKGK) carry the Nuclear localization signal motif. 213 to 216 (NEGY) is a substrate binding site. Residues tyrosine 216 and tyrosine 219 each carry the phosphotyrosine modification. Residues 245–249 (YVGSM), tyrosine 265, and lysine 275 contribute to the substrate site. Glutamate 281 is a Mg(2+) binding site.

It belongs to the FBPase class 1 family. In terms of assembly, homotetramer. Interacts with ALDOA; the interaction blocks inhibition by physiological concentrations of AMP and reduces inhibition by Ca(2+). Interacts with alpha-actinin and F-actin. The cofactor is Mg(2+). Expressed in muscle, intestine, brain and placenta and very weakly in liver.

Its subcellular location is the cell junction. It is found in the cytoplasm. The protein localises to the nucleus. The protein resides in the myofibril. It localises to the sarcomere. Its subcellular location is the z line. It carries out the reaction beta-D-fructose 1,6-bisphosphate + H2O = beta-D-fructose 6-phosphate + phosphate. It functions in the pathway carbohydrate biosynthesis; gluconeogenesis. Subject to complex allosteric regulation. The enzyme can assume an active R-state, or an inactive T-state. Intermediate conformations may exist. AMP acts as an allosteric inhibitor. Fructose 2,6-bisphosphate acts as a competitive inhibitor. Strongly inhibited by Ca(2+). Catalyzes the hydrolysis of fructose 1,6-bisphosphate to fructose 6-phosphate in the presence of divalent cations and probably participates in glycogen synthesis from carbohydrate precursors, such as lactate. The polypeptide is Fructose-1,6-bisphosphatase isozyme 2 (Fbp2) (Mus musculus (Mouse)).